We begin with the raw amino-acid sequence, 287 residues long: ATP synthase gamma chain (287 aa).

This sequence belongs to the ATPase gamma chain family. F-type ATPases have 2 components, CF(1) - the catalytic core - and CF(0) - the membrane proton channel. CF(1) has five subunits: alpha(3), beta(3), gamma(1), delta(1), epsilon(1). CF(0) has three main subunits: a, b and c.

The protein resides in the cell inner membrane. Its function is as follows. Produces ATP from ADP in the presence of a proton gradient across the membrane. The gamma chain is believed to be important in regulating ATPase activity and the flow of protons through the CF(0) complex. The chain is ATP synthase gamma chain from Azotobacter vinelandii (strain DJ / ATCC BAA-1303).